Consider the following 1499-residue polypeptide: Ubiquitinating/deubiquitinating enzyme SdeA (1499 aa).

Residues 1–193 are deubiquitinase; it reads MPKYVEGVEL…GKALRENTEK (193 aa). Residues His-64 and Asp-80 each act as for deubiquitinase activity in the active site. Cys-118 serves as the catalytic Nucleophile; for deubiquitinase activity. The mono-ADP-ribosyltransferase stretch occupies residues 760-1000; it reads PPTRLFRGLN…KALAAFPSDT (241 aa). 766-772 lines the NAD(+) pocket; sequence RGLNLSE. A 5-glutamyl glutamate modification is found at Glu-860. Residue Glu-862 coordinates NAD(+). Residues 1059–1181 are a coiled coil; the sequence is KEMGTIRREL…IDTKLADAYL (123 aa).

This sequence belongs to the SidE family. Interacts with IcmS. Is able to ubiquitinate itself, but this modification is not required to ubiquitinate Rab33b. In terms of processing, glutamylated at Glu-860 by SidJ; glutamylation inhibits SdeA activity to catalyze the production of ADP-ribosylated ubiquitin.

Its subcellular location is the secreted. It is found in the host cell. The catalysed reaction is L-arginyl-[protein] + NAD(+) = N(omega)-(ADP-D-ribosyl)-L-arginyl-[protein] + nicotinamide + H(+). With respect to regulation, ubiquitination catalyzed by SdeA is insensitive to the cysteine alkylation agent maleimide, suggesting that a cysteine conjugation of ubiquitin does not form during the reaction. In terms of biological role, secreted effector that interferes with the host cell ubiquitin pathway and is required for intracellular bacterial replication. Catalyzes the ubiquitination of several mammalian Rab proteins (Rab33b, Rab1, Rab6a and Rab30) during L.pneumophila infection, without engaging the standard cellular enzyme cascade (E1 and E2). Transfers an ADP-ribose moiety from NAD to the 'Arg-42' residue of ubiquitin in a reaction that releases nicotinamide. The modified ubiquitin is subsequently transferred to serine residues of the substrate protein via a phosphoribose linker that results in the release of AMP. Cannot ubiquitinate the endosomal Rab5 or the cytoskeletal small GTPase Rac1. Also acts as a deubiquitinase (DUB), catalyzing the cleavage of three of the most abundant polyubiquitin chains ('Lys-11', 'Lys-48' and 'Lys-63') with a distinct preference for 'Lys-63' linkages; is thus able to efficiently remove 'Lys-63'-linked polyubiquitin chains from the phagosomal surface. Is also able to remove NEDD8 from neddylated proteins, but is unable to recognize SUMO. The DUB activity of SdeA is important for regulating the dynamics of ubiquitin association with the bacterial phagosome, but is dispensable for its role in intracellular bacterial replication. In Legionella pneumophila subsp. pneumophila (strain Philadelphia 1 / ATCC 33152 / DSM 7513), this protein is Ubiquitinating/deubiquitinating enzyme SdeA.